We begin with the raw amino-acid sequence, 648 residues long: Threonine--tRNA ligase (648 aa).

Residues 1-61 (MINITFPDGA…DTDGSIEIVT (61 aa)) enclose the TGS domain. Residues 242–540 (DHRKLGKELD…LIETYKGAFP (299 aa)) form a catalytic region. Zn(2+) contacts are provided by C336, H387, and H517.

This sequence belongs to the class-II aminoacyl-tRNA synthetase family. As to quaternary structure, homodimer. Zn(2+) is required as a cofactor.

The protein localises to the cytoplasm. It catalyses the reaction tRNA(Thr) + L-threonine + ATP = L-threonyl-tRNA(Thr) + AMP + diphosphate + H(+). Its function is as follows. Catalyzes the attachment of threonine to tRNA(Thr) in a two-step reaction: L-threonine is first activated by ATP to form Thr-AMP and then transferred to the acceptor end of tRNA(Thr). Also edits incorrectly charged L-seryl-tRNA(Thr). The polypeptide is Threonine--tRNA ligase (Streptococcus uberis (strain ATCC BAA-854 / 0140J)).